The following is a 325-amino-acid chain: Hydroxymethylglutaryl-CoA lyase, mitochondrial (325 aa).

A mitochondrion-targeting transit peptide spans 1 to 27 (MAAMRKAVPRRLVGLASLRAVSTSSMG). Residues 33–300 (VKIVEVGPRD…HTGVNLQKLL (268 aa)) enclose the Pyruvate carboxyltransferase domain. Arg41 provides a ligand contact to substrate. Asp42 contacts a divalent metal cation. An N6-acetyllysine; alternate modification is found at Lys48. Lys48 carries the post-translational modification N6-succinyllysine; alternate. Lys111 carries the N6-acetyllysine modification. Residues Lys137 and Lys179 each carry the N6-acetyllysine; alternate modification. 2 positions are modified to N6-succinyllysine; alternate: Lys137 and Lys179. His233 and His235 together coordinate a divalent metal cation. Cys266 is an active-site residue. Asn275 is an a divalent metal cation binding site. Residues 323 to 325 (CKL) carry the Microbody targeting signal motif. N6-acetyllysine is present on Lys324.

This sequence belongs to the HMG-CoA lyase family. Homodimer; disulfide-linked. Can also form homotetramers.

The protein resides in the mitochondrion matrix. It localises to the peroxisome. The catalysed reaction is (3S)-3-hydroxy-3-methylglutaryl-CoA = acetoacetate + acetyl-CoA. It functions in the pathway metabolic intermediate metabolism; (S)-3-hydroxy-3-methylglutaryl-CoA degradation; acetoacetate from (S)-3-hydroxy-3-methylglutaryl-CoA: step 1/1. In terms of biological role, mitochondrial 3-hydroxy-3-methylglutaryl-CoA lyase that catalyzes a cation-dependent cleavage of (S)-3-hydroxy-3-methylglutaryl-CoA into acetyl-CoA and acetoacetate, a key step in ketogenesis. Terminal step in leucine catabolism. Ketone bodies (beta-hydroxybutyrate, acetoacetate and acetone) are essential as an alternative source of energy to glucose, as lipid precursors and as regulators of metabolism. This chain is Hydroxymethylglutaryl-CoA lyase, mitochondrial (HMGCL), found in Pongo abelii (Sumatran orangutan).